We begin with the raw amino-acid sequence, 563 residues long: Probable Xaa-Pro aminopeptidase PEPP (563 aa).

Positions 331, 342, 491, and 532 each coordinate Mn(2+).

It belongs to the peptidase M24B family. Mn(2+) is required as a cofactor.

It catalyses the reaction Release of any N-terminal amino acid, including proline, that is linked to proline, even from a dipeptide or tripeptide.. In terms of biological role, catalyzes the removal of a penultimate prolyl residue from the N-termini of peptides. In Verticillium alfalfae (strain VaMs.102 / ATCC MYA-4576 / FGSC 10136) (Verticillium wilt of alfalfa), this protein is Probable Xaa-Pro aminopeptidase PEPP (PEPP).